Reading from the N-terminus, the 458-residue chain is uncharacterized protein (458 aa).

This is an uncharacterized protein from Bacillus subtilis (strain 168).